The following is a 451-amino-acid chain: Signal transduction histidine-protein kinase ArlS (451 aa).

The next 2 membrane-spanning stretches (helical) occupy residues 11-31 (IIVT…IIIF) and 156-176 (IIAL…SYVF). An HAMP domain is found at 178 to 231 (TQITKPLVSLSNKMIEIRRDGFQNKLQLNTNYEEIDNLANTFNEMMSQIEESFN). Residues 239 to 451 (DASHELRTPL…NKGTTFKIIF (213 aa)) enclose the Histidine kinase domain. Phosphohistidine; by autocatalysis is present on His-242.

Autophosphorylated.

It is found in the cell membrane. It catalyses the reaction ATP + protein L-histidine = ADP + protein N-phospho-L-histidine.. In terms of biological role, member of the two-component regulatory system ArlS/ArlR involved in the regulation of adhesion, autolysis, multidrug resistance and virulence. ArlS probably functions as a sensor protein kinase which is autophosphorylated at a histidine residue and transfers its phosphate group to ArlR. In Staphylococcus aureus (strain bovine RF122 / ET3-1), this protein is Signal transduction histidine-protein kinase ArlS (arlS).